A 366-amino-acid polypeptide reads, in one-letter code: Septin-1 (366 aa).

The Septin-type G domain occupies 22–295; it reads KGFDFTLMVA…EGYRARCLQS (274 aa). The segment at 32-39 is G1 motif; that stretch reads GESGLGKS. Residues 32–39, Thr66, Gly92, and 171–179 each bind GTP; these read GESGLGKS and KADALMPRE. Positions 89–92 are G3 motif; the sequence is DTPG. Positions 170 to 173 are G4 motif; it reads GKAD. Phosphoserine is present on Ser206. Positions 229 and 244 each coordinate GTP. The residue at position 247 (Ser247) is a Phosphoserine. Thr250 is subject to Phosphothreonine. 2 positions are modified to phosphoserine; by AURKB: Ser306 and Ser314. Residues 347 to 366 are disordered; that stretch reads EKMQAQMQQSQAQGEQSDVL. Residues 349–366 show a composition bias toward low complexity; it reads MQAQMQQSQAQGEQSDVL.

Belongs to the TRAFAC class TrmE-Era-EngA-EngB-Septin-like GTPase superfamily. Septin GTPase family. Septins polymerize into heterooligomeric protein complexes that form filaments, and can associate with cellular membranes, actin filaments and microtubules. GTPase activity is required for filament formation. Interacts with AURKB.

The protein resides in the cytoplasm. Its subcellular location is the cytoskeleton. It is found in the microtubule organizing center. The protein localises to the centrosome. It localises to the midbody. Its function is as follows. Filament-forming cytoskeletal GTPase. May play a role in cytokinesis (Potential). This chain is Septin-1, found in Mus musculus (Mouse).